The chain runs to 523 residues: 2-isopropylmalate synthase (523 aa).

A Pyruvate carboxyltransferase domain is found at 5–267 (VIIFDTTLRD…HTNINHHEIW (263 aa)). Mn(2+) contacts are provided by D14, H202, H204, and N238. Residues 392-523 (RLDYFNVQSG…QNKENNKETV (132 aa)) are regulatory domain.

This sequence belongs to the alpha-IPM synthase/homocitrate synthase family. LeuA type 1 subfamily. In terms of assembly, homodimer. It depends on Mn(2+) as a cofactor.

The protein resides in the cytoplasm. It carries out the reaction 3-methyl-2-oxobutanoate + acetyl-CoA + H2O = (2S)-2-isopropylmalate + CoA + H(+). It participates in amino-acid biosynthesis; L-leucine biosynthesis; L-leucine from 3-methyl-2-oxobutanoate: step 1/4. Catalyzes the condensation of the acetyl group of acetyl-CoA with 3-methyl-2-oxobutanoate (2-ketoisovalerate) to form 3-carboxy-3-hydroxy-4-methylpentanoate (2-isopropylmalate). The polypeptide is 2-isopropylmalate synthase (Klebsiella pneumoniae subsp. pneumoniae (strain ATCC 700721 / MGH 78578)).